A 101-amino-acid polypeptide reads, in one-letter code: Aspartyl/glutamyl-tRNA(Asn/Gln) amidotransferase subunit C (101 aa).

Positions 75-101 are disordered; sequence QEALSGAPDAEEQRFRVPRILDEDVAS. Positions 85-101 are enriched in basic and acidic residues; sequence EEQRFRVPRILDEDVAS.

The protein belongs to the GatC family. As to quaternary structure, heterotrimer of A, B and C subunits.

The catalysed reaction is L-glutamyl-tRNA(Gln) + L-glutamine + ATP + H2O = L-glutaminyl-tRNA(Gln) + L-glutamate + ADP + phosphate + H(+). The enzyme catalyses L-aspartyl-tRNA(Asn) + L-glutamine + ATP + H2O = L-asparaginyl-tRNA(Asn) + L-glutamate + ADP + phosphate + 2 H(+). Allows the formation of correctly charged Asn-tRNA(Asn) or Gln-tRNA(Gln) through the transamidation of misacylated Asp-tRNA(Asn) or Glu-tRNA(Gln) in organisms which lack either or both of asparaginyl-tRNA or glutaminyl-tRNA synthetases. The reaction takes place in the presence of glutamine and ATP through an activated phospho-Asp-tRNA(Asn) or phospho-Glu-tRNA(Gln). The sequence is that of Aspartyl/glutamyl-tRNA(Asn/Gln) amidotransferase subunit C from Salinispora arenicola (strain CNS-205).